Reading from the N-terminus, the 261-residue chain is Cytochrome c oxidase subunit 3 (261 aa).

At 1-15 the chain is on the mitochondrial matrix side; that stretch reads MTHQTHAYHMVNPSP. Residues 16–34 traverse the membrane as a helical segment; that stretch reads WPLTGALSALLMTSGLIMW. Over 35–40 the chain is Mitochondrial intermembrane; sequence FHFNST. Residues 41–66 traverse the membrane as a helical segment; it reads ILLMLGLTTNMLTMYQWWRDIIREST. Residues 67–72 are Mitochondrial matrix-facing; it reads FQGHHT. A helical transmembrane segment spans residues 73 to 105; sequence PTVQKGLRYGMILFIISEVLFFTGFFWAFYHSS. Residues 106-128 lie on the Mitochondrial intermembrane side of the membrane; that stretch reads LAPTPELGGCWPPTGIHPLNPLE. A helical transmembrane segment spans residues 129–152; sequence VPLLNTSVLLASGVSITWAHHSLM. Residues 153 to 155 are Mitochondrial matrix-facing; sequence EGN. A helical membrane pass occupies residues 156–183; that stretch reads RNHMLQALFITIALGVYFTLLQASEYYE. The Mitochondrial intermembrane segment spans residues 184–190; it reads APFTISD. The helical transmembrane segment at 191–223 threads the bilayer; sequence GVYGSTFFVATGFHGLHVIIGSTFLIVCFFRQL. Topologically, residues 224-232 are mitochondrial matrix; it reads KFHFTSSHH. A helical transmembrane segment spans residues 233-256; that stretch reads FGFEAAAWYWHFVDVVWLFLYVSI. Residues 257–261 are Mitochondrial intermembrane-facing; it reads YWWGS.

It belongs to the cytochrome c oxidase subunit 3 family. Component of the cytochrome c oxidase (complex IV, CIV), a multisubunit enzyme composed of 14 subunits. The complex is composed of a catalytic core of 3 subunits MT-CO1, MT-CO2 and MT-CO3, encoded in the mitochondrial DNA, and 11 supernumerary subunits COX4I, COX5A, COX5B, COX6A, COX6B, COX6C, COX7A, COX7B, COX7C, COX8 and NDUFA4, which are encoded in the nuclear genome. The complex exists as a monomer or a dimer and forms supercomplexes (SCs) in the inner mitochondrial membrane with NADH-ubiquinone oxidoreductase (complex I, CI) and ubiquinol-cytochrome c oxidoreductase (cytochrome b-c1 complex, complex III, CIII), resulting in different assemblies (supercomplex SCI(1)III(2)IV(1) and megacomplex MCI(2)III(2)IV(2)).

It is found in the mitochondrion inner membrane. It carries out the reaction 4 Fe(II)-[cytochrome c] + O2 + 8 H(+)(in) = 4 Fe(III)-[cytochrome c] + 2 H2O + 4 H(+)(out). Component of the cytochrome c oxidase, the last enzyme in the mitochondrial electron transport chain which drives oxidative phosphorylation. The respiratory chain contains 3 multisubunit complexes succinate dehydrogenase (complex II, CII), ubiquinol-cytochrome c oxidoreductase (cytochrome b-c1 complex, complex III, CIII) and cytochrome c oxidase (complex IV, CIV), that cooperate to transfer electrons derived from NADH and succinate to molecular oxygen, creating an electrochemical gradient over the inner membrane that drives transmembrane transport and the ATP synthase. Cytochrome c oxidase is the component of the respiratory chain that catalyzes the reduction of oxygen to water. Electrons originating from reduced cytochrome c in the intermembrane space (IMS) are transferred via the dinuclear copper A center (CU(A)) of subunit 2 and heme A of subunit 1 to the active site in subunit 1, a binuclear center (BNC) formed by heme A3 and copper B (CU(B)). The BNC reduces molecular oxygen to 2 water molecules using 4 electrons from cytochrome c in the IMS and 4 protons from the mitochondrial matrix. This Aepyceros melampus (Impala) protein is Cytochrome c oxidase subunit 3 (MT-CO3).